The sequence spans 99 residues: Malonate decarboxylase acyl carrier protein (99 aa).

O-(phosphoribosyl dephospho-coenzyme A)serine is present on Ser-25.

This sequence belongs to the MdcC family. Post-translationally, covalently binds the prosthetic group of malonate decarboxylase.

The protein resides in the cytoplasm. Its function is as follows. Subunit of malonate decarboxylase, it is an acyl carrier protein to which acetyl and malonyl thioester residues are bound via a 2'-(5''-phosphoribosyl)-3'-dephospho-CoA prosthetic group and turn over during the catalytic mechanism. This is Malonate decarboxylase acyl carrier protein from Pseudomonas paraeruginosa (strain DSM 24068 / PA7) (Pseudomonas aeruginosa (strain PA7)).